A 229-amino-acid polypeptide reads, in one-letter code: Coiled-coil domain-containing protein 134 (229 aa).

Positions 1–22 (MDLLQFLAAFSVLLWPGTEVTG) are cleaved as a signal peptide. Asn148 is a glycosylation site (N-linked (GlcNAc...) asparagine). The interval 182-229 (FKTDQTEFIPSTDPFQKALREEEKRRKKEERRKEIRKGPRISRSQSEL) is disordered. Residues 196-218 (FQKALREEEKRRKKEERRKEIRK) are a coiled coil. The Prevents secretion from ER signature appears at 226–229 (QSEL).

This sequence belongs to the CCDC134 family. Interacts with TADA2A. Associates with the PCAF complex via TADA2A binding. O-glycosylated, with additional sialic acid modifications.

The protein localises to the endoplasmic reticulum lumen. It is found in the secreted. The protein resides in the cytoplasm. It localises to the nucleus. Molecular adapter required to prevent protein hyperglycosylation of HSP90B1: during translation, associates with nascent HSP90B1 and the STT3A catalytic component of the OST-A complex and tethers them to a specialized translocon that forms a microenvironment for HSP90B1 folding. In the CCDC134-containing translocon, STT3A associates with the SRT pseudosubstrate motif of HSP90B1, preventing access to facultative glycosylation sites until folding is completed, preventing hyperglycosylation and subsequent degradation of HSP90B1. In extracellular secreted form, promotes proliferation and activation of CD8(+) T-cells, suggesting a cytokine-like function. May inhibit ERK and JNK signaling activity. May suppress cell migration and invasion activity, via its effects on ERK and JNK signaling. May also localize in the nucleus: enhances stability of the PCAF histone acetyltransferase (HAT) complex member TADA2A and thus promotes PCAF-mediated histone acetyltransferase activity. Has a critical role in the regulation of osteogenesis and bone development. This chain is Coiled-coil domain-containing protein 134 (Ccdc134), found in Mus musculus (Mouse).